The primary structure comprises 598 residues: ATP-dependent lipid A-core flippase (598 aa).

The segment covering 1–15 (MSQAYQPDSTKTSAK) has biased composition (polar residues). Residues 1–21 (MSQAYQPDSTKTSAKTPVAPT) form a disordered region. 4 consecutive transmembrane segments (helical) span residues 44–64 (WWAI…EIWI), 85–105 (LFPF…FLGN), 172–192 (VVAL…ILFV), and 269–289 (INTP…VWLA). The ABC transmembrane type-1 domain occupies 48-329 (LLTIIGFAIN…LTDVNQQLQR (282 aa)). Residues 360 to 595 (IKLDNVSLVY…HGHYAQMYAR (236 aa)) form the ABC transporter domain. 393-400 (GRSGAGKS) serves as a coordination point for ATP.

Belongs to the ABC transporter superfamily. Lipid exporter (TC 3.A.1.106) family. Homodimer.

It is found in the cell inner membrane. It carries out the reaction ATP + H2O + lipid A-core oligosaccharideSide 1 = ADP + phosphate + lipid A-core oligosaccharideSide 2.. In terms of biological role, involved in lipopolysaccharide (LPS) biosynthesis. Translocates lipid A-core from the inner to the outer leaflet of the inner membrane. Transmembrane domains (TMD) form a pore in the inner membrane and the ATP-binding domain (NBD) is responsible for energy generation. This chain is ATP-dependent lipid A-core flippase, found in Psychrobacter cryohalolentis (strain ATCC BAA-1226 / DSM 17306 / VKM B-2378 / K5).